The primary structure comprises 633 residues: ATP-dependent clpX-like chaperone, mitochondrial (633 aa).

A mitochondrion-targeting transit peptide spans methionine 1–serine 56. Residues aspartate 68–glycine 100 are disordered. Residues glycine 69–alanine 83 show a composition bias toward basic and acidic residues. A compositionally biased stretch (low complexity) spans serine 84 to serine 93. One can recognise a ClpX-type ZB domain in the interval serine 93–isoleucine 146. 4 residues coordinate Zn(2+): cysteine 105, cysteine 108, cysteine 127, and cysteine 130. Proline 294–leucine 301 contributes to the ATP binding site. Residue lysine 437 is modified to N6-acetyllysine. The segment covering lysine 598–serine 610 has biased composition (basic and acidic residues). A disordered region spans residues lysine 598–serine 633. Over residues serine 611 to glutamate 622 the composition is skewed to acidic residues. Serine 617 is subject to Phosphoserine.

This sequence belongs to the ClpX chaperone family. As to quaternary structure, homohexamer that forms a ring structure; this hexamerization requires ATP binding. Component of the ClpXP complex formed by the assembly of two CLPP heptameric rings with two CLPX hexameric rings, giving rise to a symmetrical structure with two central CLPP rings flanked by a CLPX ring at either end of the complex. Interacts with TFAM. Higher expression in skeletal muscle and heart and to a lesser extent in liver, brain, placenta, lung, kidney and pancreas.

It is found in the mitochondrion. The protein resides in the mitochondrion matrix. It localises to the mitochondrion nucleoid. The enzyme catalyses ATP + H2O = ADP + phosphate + H(+). ATP-dependent chaperone that functions as an unfoldase. As part of the ClpXP protease complex, it recognizes specific protein substrates, unfolds them using energy derived from ATP hydrolysis, and then translocates them to the proteolytic subunit (CLPP) of the ClpXP complex for degradation. Thanks to its chaperone activity, it also functions in the incorporation of the pyridoxal phosphate cofactor into 5-aminolevulinate synthase, thereby activating 5-aminolevulinate (ALA) synthesis, the first step in heme biosynthesis. This chaperone is also involved in the control of mtDNA nucleoid distribution, by regulating mitochondrial transcription factor A (TFAM) activity. The sequence is that of ATP-dependent clpX-like chaperone, mitochondrial from Homo sapiens (Human).